The primary structure comprises 235 residues: 2-C-methyl-D-erythritol 4-phosphate cytidylyltransferase (235 aa).

The protein belongs to the IspD/TarI cytidylyltransferase family. IspD subfamily.

It catalyses the reaction 2-C-methyl-D-erythritol 4-phosphate + CTP + H(+) = 4-CDP-2-C-methyl-D-erythritol + diphosphate. The protein operates within isoprenoid biosynthesis; isopentenyl diphosphate biosynthesis via DXP pathway; isopentenyl diphosphate from 1-deoxy-D-xylulose 5-phosphate: step 2/6. Its function is as follows. Catalyzes the formation of 4-diphosphocytidyl-2-C-methyl-D-erythritol from CTP and 2-C-methyl-D-erythritol 4-phosphate (MEP). This Ectopseudomonas mendocina (strain ymp) (Pseudomonas mendocina) protein is 2-C-methyl-D-erythritol 4-phosphate cytidylyltransferase.